Reading from the N-terminus, the 346-residue chain is Biotin synthase (346 aa).

Residues 36–265 (YFGRQVMLHR…KAEIRIGGGR (230 aa)) form the Radical SAM core domain. [4Fe-4S] cluster contacts are provided by Cys54, Cys58, and Cys61. Positions 98, 130, 190, and 260 each coordinate [2Fe-2S] cluster.

It belongs to the radical SAM superfamily. Biotin synthase family. Homodimer. It depends on [4Fe-4S] cluster as a cofactor. The cofactor is [2Fe-2S] cluster.

It catalyses the reaction (4R,5S)-dethiobiotin + (sulfur carrier)-SH + 2 reduced [2Fe-2S]-[ferredoxin] + 2 S-adenosyl-L-methionine = (sulfur carrier)-H + biotin + 2 5'-deoxyadenosine + 2 L-methionine + 2 oxidized [2Fe-2S]-[ferredoxin]. The protein operates within cofactor biosynthesis; biotin biosynthesis; biotin from 7,8-diaminononanoate: step 2/2. In terms of biological role, catalyzes the conversion of dethiobiotin (DTB) to biotin by the insertion of a sulfur atom into dethiobiotin via a radical-based mechanism. The chain is Biotin synthase from Acaryochloris marina (strain MBIC 11017).